The primary structure comprises 321 residues: MTSKLEQLRAITTVVADTGDIEAVARLKPVDCTTNPTIVLKALGTPAFADAVKEAVAWGRKQGGQSDAVVAAVADRLAISVGAALAGLVPGRVSTEVDADLSFDTQASITKARHIIASYKERGIERERILIKLASTWEGIKAAEVLQSEGIDCNLTLLFSQAQAIACAEAKAFLISPFVGRILDWYKKSTGETYTAETDPGVVSVRSIYNYYKANGIGTVVMGASFRNVGEIEALAGCDRLTISPALLEELDKDNGKLERKLSPDNVKAEALQSLDEKAFRWAMNEDAMATEKLSEGIRLFAKDLVTLREMVRKELTAAAA.

The active-site Schiff-base intermediate with substrate is lysine 132.

Belongs to the transaldolase family. Type 1 subfamily. Homodimer.

The protein resides in the cytoplasm. The enzyme catalyses D-sedoheptulose 7-phosphate + D-glyceraldehyde 3-phosphate = D-erythrose 4-phosphate + beta-D-fructose 6-phosphate. It participates in carbohydrate degradation; pentose phosphate pathway; D-glyceraldehyde 3-phosphate and beta-D-fructose 6-phosphate from D-ribose 5-phosphate and D-xylulose 5-phosphate (non-oxidative stage): step 2/3. Functionally, transaldolase is important for the balance of metabolites in the pentose-phosphate pathway. This is Transaldolase from Agrobacterium fabrum (strain C58 / ATCC 33970) (Agrobacterium tumefaciens (strain C58)).